The chain runs to 565 residues: Sulfite reductase [NADPH] hemoprotein beta-component (565 aa).

Residues cysteine 429, cysteine 435, cysteine 474, and cysteine 478 each contribute to the [4Fe-4S] cluster site. Cysteine 478 is a siroheme binding site.

It belongs to the nitrite and sulfite reductase 4Fe-4S domain family. As to quaternary structure, alpha(8)-beta(8). The alpha component is a flavoprotein, the beta component is a hemoprotein. The cofactor is siroheme. [4Fe-4S] cluster serves as cofactor.

It catalyses the reaction hydrogen sulfide + 3 NADP(+) + 3 H2O = sulfite + 3 NADPH + 4 H(+). Its pathway is sulfur metabolism; hydrogen sulfide biosynthesis; hydrogen sulfide from sulfite (NADPH route): step 1/1. In terms of biological role, component of the sulfite reductase complex that catalyzes the 6-electron reduction of sulfite to sulfide. This is one of several activities required for the biosynthesis of L-cysteine from sulfate. This is Sulfite reductase [NADPH] hemoprotein beta-component from Shewanella sp. (strain MR-7).